A 637-amino-acid chain; its full sequence is Poly [ADP-ribose] polymerase 2 (637 aa).

The DNA-binding element occupies methionine 1–threonine 140. Positions alanine 2–isoleucine 36 constitute an SAP 1 domain. Residues alanine 35–lysine 46 show a composition bias toward basic and acidic residues. The tract at residues alanine 35–aspartate 56 is disordered. A Nuclear localization signal motif is present at residues lysine 41–lysine 62. An SAP 2 domain is found at phenylalanine 69–alanine 103. Over residues valine 106–threonine 117 the composition is skewed to polar residues. The interval valine 106 to glutamate 134 is disordered. The segment covering aspartate 118–phenylalanine 127 has biased composition (acidic residues). Residues glutamine 158–tyrosine 255 form the WGR domain. The PARP alpha-helical domain maps to glutamine 286–serine 404. Residues aspartate 412 to histidine 637 enclose the PARP catalytic domain.

Belongs to the ARTD/PARP family.

It localises to the nucleus. It carries out the reaction NAD(+) + (ADP-D-ribosyl)n-acceptor = nicotinamide + (ADP-D-ribosyl)n+1-acceptor + H(+).. The enzyme catalyses L-aspartyl-[protein] + NAD(+) = 4-O-(ADP-D-ribosyl)-L-aspartyl-[protein] + nicotinamide. The catalysed reaction is L-glutamyl-[protein] + NAD(+) = 5-O-(ADP-D-ribosyl)-L-glutamyl-[protein] + nicotinamide. In terms of biological role, involved in the base excision repair (BER) pathway, by catalyzing the poly(ADP-ribosyl)ation of a limited number of acceptor proteins involved in chromatin architecture and in DNA metabolism. This modification follows DNA damages and appears as an obligatory step in a detection/signaling pathway leading to the reparation of DNA strand breaks. This chain is Poly [ADP-ribose] polymerase 2 (PARP2), found in Arabidopsis thaliana (Mouse-ear cress).